The following is a 129-amino-acid chain: NADPH-dependent 7-cyano-7-deazaguanine reductase (129 aa).

Cys34 functions as the Thioimide intermediate in the catalytic mechanism. Catalysis depends on Asp41, which acts as the Proton donor. Substrate contacts are provided by residues 56-58 (VEL) and 75-76 (HE).

Belongs to the GTP cyclohydrolase I family. QueF type 1 subfamily.

The protein resides in the cytoplasm. The catalysed reaction is 7-aminomethyl-7-carbaguanine + 2 NADP(+) = 7-cyano-7-deazaguanine + 2 NADPH + 3 H(+). It participates in tRNA modification; tRNA-queuosine biosynthesis. Functionally, catalyzes the NADPH-dependent reduction of 7-cyano-7-deazaguanine (preQ0) to 7-aminomethyl-7-deazaguanine (preQ1). This chain is NADPH-dependent 7-cyano-7-deazaguanine reductase, found in Nitrosococcus oceani (strain ATCC 19707 / BCRC 17464 / JCM 30415 / NCIMB 11848 / C-107).